Reading from the N-terminus, the 123-residue chain is Large ribosomal subunit protein bL12 (123 aa).

This sequence belongs to the bacterial ribosomal protein bL12 family. In terms of assembly, homodimer. Part of the ribosomal stalk of the 50S ribosomal subunit. Forms a multimeric L10(L12)X complex, where L10 forms an elongated spine to which 2 to 4 L12 dimers bind in a sequential fashion. Binds GTP-bound translation factors.

In terms of biological role, forms part of the ribosomal stalk which helps the ribosome interact with GTP-bound translation factors. Is thus essential for accurate translation. The protein is Large ribosomal subunit protein bL12 of Dehalococcoides mccartyi (strain ATCC BAA-2100 / JCM 16839 / KCTC 5957 / BAV1).